The following is a 133-amino-acid chain: Small ribosomal subunit protein uS8 (133 aa).

Belongs to the universal ribosomal protein uS8 family. Part of the 30S ribosomal subunit. Contacts proteins S5 and S12.

One of the primary rRNA binding proteins, it binds directly to 16S rRNA central domain where it helps coordinate assembly of the platform of the 30S subunit. The protein is Small ribosomal subunit protein uS8 of Prochlorococcus marinus (strain MIT 9312).